The sequence spans 1362 residues: Insulin receptor (1362 aa).

Residues 1 to 37 (MGQGVLRGEGHPNNNPNSKVGWKSLVGIITIFMLILC) form the signal peptide. The leucine-rich region stretch occupies residues 38–184 (DQSDGKICYS…DSVEDNYIEL (147 aa)). Cys45 and Cys63 are disulfide-bonded. N-linked (GlcNAc...) asparagine glycosylation is found at Asn53, Asn115, and Asn148. Intrachain disulfides connect Cys163–Cys192, Cys196–Cys219, Cys206–Cys225, Cys229–Cys238, Cys233–Cys244, Cys245–Cys253, Cys249–Cys262, Cys265–Cys274, Cys278–Cys290, Cys296–Cys321, Cys303–Cys311, Cys325–Cys338, Cys341–Cys345, and Cys349–Cys370. Asn332 carries an N-linked (GlcNAc...) asparagine glycan. Residues Asn374, Asn434, and Asn455 are each glycosylated (N-linked (GlcNAc...) asparagine). Residues Cys472 and Cys505 are joined by a disulfide bond. Fibronectin type-III domains follow at residues 508–629 (NLLT…TNET) and 633–730 (VPLD…IQKE). N-linked (GlcNAc...) asparagine glycans are attached at residues Asn551, Asn627, Asn642, Asn660, and Asn707. 2 disulfide bridges follow: Cys683-Cys896 and Cys822-Cys830. The tract at residues 694–714 (WTPPTEIDENGNENQTEHTSV) is disordered. Polar residues predominate over residues 705 to 714 (NENQTEHTSV). An insulin-binding region spans residues 741-749 (ENYLHNEVF). The Extracellular portion of the chain corresponds to 759–951 (DLFGVANGTL…PDHPHSNIVK (193 aa)). N-linked (GlcNAc...) asparagine glycans are attached at residues Asn765 and Asn779. A Fibronectin type-III 3 domain is found at 849-944 (VVGPITYEYV…EQAYFQVPDH (96 aa)). Asn917 and Asn930 each carry an N-linked (GlcNAc...) asparagine glycan. A helical transmembrane segment spans residues 952–972 (IITGPIIAVFLLLIVLVYCVV). The Cytoplasmic segment spans residues 973–1362 (QKKKDAEGPA…ILSLPRSSPS (390 aa)). Tyr993 carries the phosphotyrosine; by autocatalysis modification. Residues 1012–1287 (INLLRELGQG…MLKDDLRPSF (276 aa)) form the Protein kinase domain. ATP contacts are provided by residues Ser1022, Lys1046, and 1093–1099 (ELMAHGD). Asp1148 (proton donor/acceptor) is an active-site residue. ATP-binding positions include 1152–1153 (RN) and Asp1166. 5 positions are modified to phosphotyrosine; by autocatalysis: Tyr1174, Tyr1178, Tyr1179, Tyr1335, and Tyr1341.

Belongs to the protein kinase superfamily. Tyr protein kinase family. Insulin receptor subfamily. In terms of assembly, tetramer of 2 alpha and 2 beta chains linked by disulfide bonds. The alpha chains contribute to the formation of the ligand-binding domain, while the beta chains carry the kinase domain. In terms of processing, autophosphorylated on tyrosine residues in response to insulin. As to expression, localized mainly to the envelope in oocytes. Localized to the animal hemisphere during early embryonic cleavage. Expressed during organogenesis in regions of ecto- and mesodermic origins. Expressed in the entire encephalon, the otic and optic vesicles, the gills, the somites and the pronephric tubules of the embryo. Also found in adult liver, muscle and regenerated forelimbs.

The protein resides in the cell membrane. The catalysed reaction is L-tyrosyl-[protein] + ATP = O-phospho-L-tyrosyl-[protein] + ADP + H(+). Its activity is regulated as follows. Autophosphorylation activates the kinase activity. In terms of biological role, receptor tyrosine kinase which mediates actions of insulin. May be required for forelimb regeneration. The sequence is that of Insulin receptor (insr) from Xenopus laevis (African clawed frog).